The following is a 923-amino-acid chain: Periodic tryptophan protein 2 (923 aa).

WD repeat units follow at residues 12–52 (GTVY…TFEY), 53–93 (EHRK…LHHF), 94–132 (NFKE…KDRQ), 144–183 (GHFQ…KNLA), and 189–228 (GHRD…SDDD). Phosphoserine is present on residues S225 and S232. WD repeat units follow at residues 258–297 (ANQA…LIQQ), 300–340 (MGQN…YILK), 343–382 (GHFD…CLAT), 385–424 (EHTS…NFRT), 428–470 (TERI…DALS), 471–510 (GHEG…QQVE), 513–552 (EVYS…QVGN), and 575–614 (ERSK…LLKR). S651 and S664 each carry phosphoserine. A disordered region spans residues 653 to 674 (LEDRIDNSLPGSQRGGDLSTRK). Residues 676-714 (RPEVRVTSVQFSPTANAFAAASTEGLLIYSTNDTILFDP) form a WD 14 repeat. 2 stretches are compositionally biased toward acidic residues: residues 869–893 (KDDA…DEEG) and 911–923 (DSSD…KELP). Positions 869-923 (KDDADEDNEENEENDVVMESDDEEGWIGFNGKDNKLPLSNENDSSDEEENEKELP) are disordered. Phosphoserine is present on residues S912 and S913.

This sequence belongs to the WD repeat PWP2 family. As to quaternary structure, interacts with snoRNA U3. Interacts with MPP10. Component of the ribosomal small subunit (SSU) processome composed of at least 40 protein subunits and snoRNA U3.

The protein localises to the nucleus. Its subcellular location is the nucleolus. Required for bud-site selection and cell separation. Also involved in nucleolar processing of pre-18S ribosomal RNA. The polypeptide is Periodic tryptophan protein 2 (PWP2) (Saccharomyces cerevisiae (strain ATCC 204508 / S288c) (Baker's yeast)).